The following is a 54-amino-acid chain: Large ribosomal subunit protein bL33 (54 aa).

This sequence belongs to the bacterial ribosomal protein bL33 family.

The chain is Large ribosomal subunit protein bL33 from Parafrankia sp. (strain EAN1pec).